A 273-amino-acid chain; its full sequence is Large ribosomal subunit protein uL2cz/uL2cy (273 aa).

2 disordered regions span residues 1 to 20 and 224 to 254; these read MAIHLYKTSTPSTRKGAVDS and NPVDHPHGGGEGRAPIGRKKPTTPWGYPALG.

This sequence belongs to the universal ribosomal protein uL2 family. In terms of assembly, part of the 50S ribosomal subunit.

The protein resides in the plastid. The protein localises to the chloroplast. The protein is Large ribosomal subunit protein uL2cz/uL2cy (rpl2-A) of Nuphar advena (Common spatterdock).